Here is a 631-residue protein sequence, read N- to C-terminus: Mercuric reductase (631 aa).

2 HMA domains span residues lysine 2–glycine 66 and lysine 81–glycine 145. A metal cation contacts are provided by cysteine 13, cysteine 16, cysteine 92, and cysteine 95. Residues alanine 181, glycine 201, and threonine 206 each contribute to the FAD site. Cysteines 207 and 212 form a disulfide. FAD contacts are provided by lysine 216, aspartate 472, and valine 480. The Hg(2+) site is built by cysteine 628 and cysteine 629.

This sequence belongs to the class-I pyridine nucleotide-disulfide oxidoreductase family. As to quaternary structure, homodimer. The cofactor is FAD.

It catalyses the reaction Hg + NADP(+) + H(+) = Hg(2+) + NADPH. Its function is as follows. Resistance to Hg(2+) in bacteria appears to be governed by a specialized system which includes mercuric reductase. MerA protein is responsible for volatilizing mercury as Hg(0). This chain is Mercuric reductase (merA), found in Bacillus cereus.